Reading from the N-terminus, the 459-residue chain is Exodeoxyribonuclease 7 large subunit (459 aa).

The protein belongs to the XseA family. Heterooligomer composed of large and small subunits.

It localises to the cytoplasm. It carries out the reaction Exonucleolytic cleavage in either 5'- to 3'- or 3'- to 5'-direction to yield nucleoside 5'-phosphates.. Bidirectionally degrades single-stranded DNA into large acid-insoluble oligonucleotides, which are then degraded further into small acid-soluble oligonucleotides. The polypeptide is Exodeoxyribonuclease 7 large subunit (Pseudomonas aeruginosa (strain ATCC 15692 / DSM 22644 / CIP 104116 / JCM 14847 / LMG 12228 / 1C / PRS 101 / PAO1)).